A 428-amino-acid polypeptide reads, in one-letter code: Probable methanogen homoaconitase large subunit (428 aa).

[4Fe-4S] cluster contacts are provided by cysteine 304, cysteine 364, and cysteine 367.

Belongs to the aconitase/IPM isomerase family. LeuC type 2 subfamily. As to quaternary structure, heterotetramer of 2 HacA and 2 HacB proteins.

The enzyme catalyses (2R)-homocitrate = (2R,3S)-homoisocitrate. It catalyses the reaction (2R)-homocitrate = cis-homoaconitate + H2O. It carries out the reaction (2R,3S)-homoisocitrate = cis-homoaconitate + H2O. The catalysed reaction is cis-(homo)2aconitate + H2O = (2R,3S)-iso(homo)2citrate. The enzyme catalyses cis-(homo)3aconitate + H2O = (2R,3S)-iso(homo)3citrate. The protein operates within organic acid metabolism; 2-oxosuberate biosynthesis. Component of a hydro-lyase with broad substrate specificity for cis-unsaturated tricarboxylic acids. Catalyzes both the reversible dehydration of (R)-homocitrate ((R)-2-hydroxybutane-1,2,4-tricarboxylate) to produce cis-homoaconitate ((Z)-but-1-ene-1,2,4-tricarboxylate), and its hydration to homoisocitrate ((1R,2S)-1-hydroxybutane-1,2,4-tricarboxylate). Is also able to hydrate the analogous longer chain substrates cis-homo(2)-aconitate, cis-homo(3)-aconitate. These reactions are part of the biosynthesis pathway of coenzyme B. This chain is Probable methanogen homoaconitase large subunit (hacA), found in Methanothermobacter thermautotrophicus (strain ATCC 29096 / DSM 1053 / JCM 10044 / NBRC 100330 / Delta H) (Methanobacterium thermoautotrophicum).